The following is a 307-amino-acid chain: D-alanine--D-alanine ligase (307 aa).

The region spanning 101-301 (KTVMRAAGVD…FGELVRWMVE (201 aa)) is the ATP-grasp domain. 127 to 182 (PLPPPYVVKPIAEGSSVGVIIVRDGRSHPPQILASEEWTFGEQVLAEPYIAGRELT) is an ATP binding site. Residues Asp251, Glu268, and Asn270 each coordinate Mg(2+).

The protein belongs to the D-alanine--D-alanine ligase family. Mg(2+) is required as a cofactor. Mn(2+) serves as cofactor.

The protein localises to the cytoplasm. It carries out the reaction 2 D-alanine + ATP = D-alanyl-D-alanine + ADP + phosphate + H(+). The protein operates within cell wall biogenesis; peptidoglycan biosynthesis. In terms of biological role, cell wall formation. This Methylobacterium radiotolerans (strain ATCC 27329 / DSM 1819 / JCM 2831 / NBRC 15690 / NCIMB 10815 / 0-1) protein is D-alanine--D-alanine ligase.